A 248-amino-acid polypeptide reads, in one-letter code: Pyridoxine 5'-phosphate synthase (248 aa).

Residue asparagine 12 participates in 3-amino-2-oxopropyl phosphate binding. A 1-deoxy-D-xylulose 5-phosphate-binding site is contributed by 14–15 (DH). A 3-amino-2-oxopropyl phosphate-binding site is contributed by arginine 23. Residue histidine 48 is the Proton acceptor of the active site. Positions 50 and 55 each coordinate 1-deoxy-D-xylulose 5-phosphate. Glutamate 75 serves as the catalytic Proton acceptor. Threonine 105 is a binding site for 1-deoxy-D-xylulose 5-phosphate. The Proton donor role is filled by histidine 196. Residues glycine 197 and 218 to 219 (GH) contribute to the 3-amino-2-oxopropyl phosphate site.

This sequence belongs to the PNP synthase family. Homooctamer; tetramer of dimers.

Its subcellular location is the cytoplasm. It catalyses the reaction 3-amino-2-oxopropyl phosphate + 1-deoxy-D-xylulose 5-phosphate = pyridoxine 5'-phosphate + phosphate + 2 H2O + H(+). It participates in cofactor biosynthesis; pyridoxine 5'-phosphate biosynthesis; pyridoxine 5'-phosphate from D-erythrose 4-phosphate: step 5/5. In terms of biological role, catalyzes the complicated ring closure reaction between the two acyclic compounds 1-deoxy-D-xylulose-5-phosphate (DXP) and 3-amino-2-oxopropyl phosphate (1-amino-acetone-3-phosphate or AAP) to form pyridoxine 5'-phosphate (PNP) and inorganic phosphate. In Pseudomonas aeruginosa (strain UCBPP-PA14), this protein is Pyridoxine 5'-phosphate synthase.